A 77-amino-acid chain; its full sequence is Acyl carrier protein (77 aa).

The region spanning 1 to 76 (MSLEDDVKAI…DVIKYIQERQ (76 aa)) is the Carrier domain. O-(pantetheine 4'-phosphoryl)serine is present on Ser36.

It belongs to the acyl carrier protein (ACP) family. 4'-phosphopantetheine is transferred from CoA to a specific serine of apo-ACP by AcpS. This modification is essential for activity because fatty acids are bound in thioester linkage to the sulfhydryl of the prosthetic group.

The protein localises to the cytoplasm. It functions in the pathway lipid metabolism; fatty acid biosynthesis. Carrier of the growing fatty acid chain in fatty acid biosynthesis. The sequence is that of Acyl carrier protein from Chlamydia muridarum (strain MoPn / Nigg).